The chain runs to 300 residues: Pantoate--beta-alanine ligase (300 aa).

Residue 43–50 (MGYLHSGH) participates in ATP binding. His50 (proton donor) is an active-site residue. A (R)-pantoate-binding site is contributed by Gln74. Gln74 contributes to the beta-alanine binding site. 162–165 (GQKD) provides a ligand contact to ATP. A (R)-pantoate-binding site is contributed by Gln168. Residues Ile191 and 199-202 (KSSR) contribute to the ATP site.

Belongs to the pantothenate synthetase family. As to quaternary structure, homodimer.

It localises to the cytoplasm. The enzyme catalyses (R)-pantoate + beta-alanine + ATP = (R)-pantothenate + AMP + diphosphate + H(+). It functions in the pathway cofactor biosynthesis; (R)-pantothenate biosynthesis; (R)-pantothenate from (R)-pantoate and beta-alanine: step 1/1. In terms of biological role, catalyzes the condensation of pantoate with beta-alanine in an ATP-dependent reaction via a pantoyl-adenylate intermediate. This chain is Pantoate--beta-alanine ligase (panC), found in Dictyostelium discoideum (Social amoeba).